The primary structure comprises 167 residues: Leptin (167 aa).

The first 21 residues, 1–21, serve as a signal peptide directing secretion; it reads MLCGPLCRFLWLWPYLSYVEA. Cysteine 117 and cysteine 167 are joined by a disulfide.

The protein belongs to the leptin family.

It localises to the secreted. Its function is as follows. Key player in the regulation of energy balance and body weight control. Once released into the circulation, has central and peripheral effects by binding LEPR, found in many tissues, which results in the activation of several major signaling pathways. In the hypothalamus, acts as an appetite-regulating factor that induces a decrease in food intake and an increase in energy consumption by inducing anorexinogenic factors and suppressing orexigenic neuropeptides, also regulates bone mass and secretion of hypothalamo-pituitary-adrenal hormones. In the periphery, increases basal metabolism, influences reproductive function, regulates pancreatic beta-cell function and insulin secretion, is pro-angiogenic for endothelial cell and affects innate and adaptive immunity. In the arcuate nucleus of the hypothalamus, activates by depolarization POMC neurons inducing FOS and SOCS3 expression to release anorexigenic peptides and inhibits by hyperpolarization NPY neurons inducing SOCS3 with a consequent reduction on release of orexigenic peptides. In addition to its known satiety inducing effect, has a modulatory role in nutrient absorption. In the intestine, reduces glucose absorption by enterocytes by activating PKC and leading to a sequential activation of p38, PI3K and ERK signaling pathways which exerts an inhibitory effect on glucose absorption. Acts as a growth factor on certain tissues, through the activation of different signaling pathways increases expression of genes involved in cell cycle regulation such as CCND1, via JAK2-STAT3 pathway, or VEGFA, via MAPK1/3 and PI3K-AKT1 pathways. May also play an apoptotic role via JAK2-STAT3 pathway and up-regulation of BIRC5 expression. Pro-angiogenic, has mitogenic activity on vascular endothelial cells and plays a role in matrix remodeling by regulating the expression of matrix metalloproteinases (MMPs) and tissue inhibitors of metalloproteinases (TIMPs). In innate immunity, modulates the activity and function of neutrophils by increasing chemotaxis and the secretion of oxygen radicals. Increases phagocytosis by macrophages and enhances secretion of pro-inflammatory mediators. Increases cytotoxic ability of NK cells. Plays a pro-inflammatory role, in synergy with IL1B, by inducing NOS2 which promotes the production of IL6, IL8 and Prostaglandin E2, through a signaling pathway that involves JAK2, PI3K, MAP2K1/MEK1 and MAPK14/p38. In adaptive immunity, promotes the switch of memory T-cells towards T helper-1 cell immune responses. Increases CD4(+)CD25(-) T-cell proliferation and reduces autophagy during TCR (T-cell receptor) stimulation, through MTOR signaling pathway activation and BCL2 up-regulation. This chain is Leptin (LEP), found in Felis catus (Cat).